The chain runs to 223 residues: Small ribosomal subunit protein uS3 (223 aa).

Residues 38-106 (IREFIAKQLT…RVHINIVEIK (69 aa)) form the KH type-2 domain.

It belongs to the universal ribosomal protein uS3 family. As to quaternary structure, part of the 30S ribosomal subunit. Forms a tight complex with proteins S10 and S14.

Functionally, binds the lower part of the 30S subunit head. Binds mRNA in the 70S ribosome, positioning it for translation. This chain is Small ribosomal subunit protein uS3, found in Pediococcus pentosaceus (strain ATCC 25745 / CCUG 21536 / LMG 10740 / 183-1w).